Reading from the N-terminus, the 338-residue chain is Trace amine-associated receptor 9 (338 aa).

Residues 1–23 (MELCYENVNGSCIKSSYSPWPRA) are Extracellular-facing. Asparagine 9 carries an N-linked (GlcNAc...) asparagine glycan. 2 disulfide bridges follow: cysteine 12-cysteine 176 and cysteine 95-cysteine 180. A helical transmembrane segment spans residues 24–48 (ILYAVLGLGALLAVFGNLLVITAIL). The Cytoplasmic segment spans residues 49–58 (HFKQLHTPTN). Residues 59-80 (FLVASLACADFLVGVTVMPFST) form a helical membrane-spanning segment. Residues 81–95 (VRSVEGCWYFGDTYC) lie on the Extracellular side of the membrane. A helical transmembrane segment spans residues 96 to 118 (KFHTCFDTSFCFASLFHLCCISI). Residues aspartate 102 and threonine 103 each coordinate spermidine. The Cytoplasmic portion of the chain corresponds to 119–138 (DRYVAVTDPLTYPTKFTISV). Residues 139-160 (SGVCIALSWFFSVTYSFSIFYT) form a helical membrane-spanning segment. The Extracellular segment spans residues 161–186 (GANEEGIEELVVALTCVGGCQAPLNQ). Positions 164–177 (EEGIEELVVALTCV) are extracellular Loop 2 (ECL2). Residues 187–208 (NWVLLCFLLFFLPTVVMVFLYG) traverse the membrane as a helical segment. The Cytoplasmic segment spans residues 209-246 (RIFLVAKQQARKIEGSANQPQASSESYKERVARRERKA). A helical transmembrane segment spans residues 247–270 (AKTLGIAMAAFLVSWLPYIIDAVI). Residues 271–283 (DAYMNFITPAYVY) are Extracellular-facing. A helical membrane pass occupies residues 284–304 (EILVWCVYYNSAMNPLIYAFF). Topologically, residues 305-338 (YPWFRKAIKLIVSGKVFRADSSRTNLFSEEAGAG) are cytoplasmic.

The protein belongs to the G-protein coupled receptor 1 family. Mainly expressed in neurons of the olfactory epithelium. Also expressed in the intestine.

The protein localises to the cell membrane. Its function is as follows. Olfactory receptor specific for trace amines, such as triethylamine, N-methylpiperidine, N,N-dimethylcyclohexylamine (DMCHA), beta-phenylethylamine (beta-PEA), cadaverine (CAD) and polyamines such as spermidine. Trace amine compounds are enriched in animal body fluids and act on trace amine-associated receptors (TAARs) to elicit both intraspecific and interspecific innate behaviors. Trace amine-binding causes a conformation change that triggers signaling via G(s)-class of G alpha proteins (GNAL or GNAS). In mature olfactory sensory neurons, Taar9 is coupled with GNAL/G(olf)G alpha protein and mediates activation of adenylate cyclase activity to activate cAMP signaling and eventually transmit odorant signals to achieve membrane depolarization. In immature olfactory sensory neurons, Taar9 is coupled with GNAS/G(s) G alpha proteins. The chain is Trace amine-associated receptor 9 from Rattus norvegicus (Rat).